The chain runs to 216 residues: Small ribosomal subunit protein uS3 (216 aa).

The region spanning 24–93 (IKEFLEYRLA…NPQIDVIDVS (70 aa)) is the KH type-2 domain.

Belongs to the universal ribosomal protein uS3 family. In terms of assembly, part of the 30S ribosomal subunit.

In terms of biological role, binds the lower part of the 30S subunit head. This chain is Small ribosomal subunit protein uS3, found in Pyrobaculum calidifontis (strain DSM 21063 / JCM 11548 / VA1).